Here is a 691-residue protein sequence, read N- to C-terminus: Gex-3-interacting protein 13 (691 aa).

2 disordered regions span residues 18 to 97 and 171 to 195; these read TASL…SAHL and PASP…KRQR. The span at 31-46 shows a compositional bias: low complexity; that stretch reads SSFTTTSESTSPPYSS. Over residues 47–57 the composition is skewed to basic and acidic residues; the sequence is SEHHSPTDQRT. Positions 58–79 are enriched in polar residues; sequence ETPTSDSGNASFSPENVATSFE. Residues 171–183 show a composition bias toward low complexity; the sequence is PASPCTTAASAPS. BED-type zinc fingers lie at residues 194-242 and 424-473; these read QRRN…YEKV and LRRH…YEKV. Zn(2+) is bound by residues C212, C215, H230, H235, C443, C446, H461, and H466.

As to quaternary structure, interacts with gex-3.

The sequence is that of Gex-3-interacting protein 13 (gei-13) from Caenorhabditis elegans.